Reading from the N-terminus, the 248-residue chain is PF03932 family protein CutC (248 aa).

This sequence belongs to the CutC family. As to quaternary structure, homodimer.

The protein localises to the cytoplasm. This chain is PF03932 family protein CutC, found in Escherichia coli O9:H4 (strain HS).